Consider the following 565-residue polypeptide: Sulfite reductase [NADPH] hemoprotein beta-component (565 aa).

[4Fe-4S] cluster contacts are provided by C429, C435, C474, and C478. C478 is a binding site for siroheme.

The protein belongs to the nitrite and sulfite reductase 4Fe-4S domain family. Alpha(8)-beta(8). The alpha component is a flavoprotein, the beta component is a hemoprotein. It depends on siroheme as a cofactor. Requires [4Fe-4S] cluster as cofactor.

It carries out the reaction hydrogen sulfide + 3 NADP(+) + 3 H2O = sulfite + 3 NADPH + 4 H(+). Its pathway is sulfur metabolism; hydrogen sulfide biosynthesis; hydrogen sulfide from sulfite (NADPH route): step 1/1. In terms of biological role, component of the sulfite reductase complex that catalyzes the 6-electron reduction of sulfite to sulfide. This is one of several activities required for the biosynthesis of L-cysteine from sulfate. The polypeptide is Sulfite reductase [NADPH] hemoprotein beta-component (Shewanella piezotolerans (strain WP3 / JCM 13877)).